The sequence spans 950 residues: F-box only protein 10 (950 aa).

The F-box domain occupies methionine 1 to leucine 48. 2 PbH1 repeats span residues serine 198–glycine 217 and valine 238–glycine 260. The tract at residues isoleucine 313–glutamate 364 is disordered. Residues glycine 315–cysteine 324 are compositionally biased toward polar residues. 2 positions are modified to phosphoserine: serine 321 and serine 326. A compositionally biased stretch (basic and acidic residues) spans glycine 330 to arginine 342. A compositionally biased stretch (low complexity) spans proline 347–serine 357. PbH1 repeat units lie at residues valine 423–serine 444, asparagine 467–leucine 489, glutamate 490–lysine 512, lysine 513–glycine 535, asparagine 536–tyrosine 558, histidine 559–glutamate 581, asparagine 582–arginine 604, glycine 605–aspartate 627, glutamate 628–serine 650, serine 651–serine 673, isoleucine 713–serine 735, serine 736–glutamine 758, serine 760–phenylalanine 782, glutamine 783–glycine 805, and arginine 828–glycine 850.

In terms of assembly, component of the SCF(FBXO10) complex consisting of CUL1, SKP1 and FBXO10. Interacts with BCL2. Interacts with PRDM1. As to expression, particularly highly expressed in B-cells.

The protein resides in the cytoplasm. It participates in protein modification; protein ubiquitination. Substrate-recognition component of the SCF (SKP1-CUL1-F-box protein)-type E3 ubiquitin ligase complex. Mediates the ubiquitination and degradation of BCL2, an antiapoptotic protein, thereby playing a role in apoptosis by controlling the stability of BCL2. Targets also the receptor for advanced glycation end products RAGE for ubiquitination and subsequent lysosomal degradation. Directly controls HGAL/GCSAM ubiquitination and degradation and thereby decreases BCR signaling. The chain is F-box only protein 10 (Fbxo10) from Mus musculus (Mouse).